A 263-amino-acid chain; its full sequence is Hydroxyethylthiazole kinase 2 (263 aa).

A substrate-binding site is contributed by methionine 42. The ATP site is built by lysine 118 and threonine 164. Residue glycine 191 coordinates substrate.

Belongs to the Thz kinase family. It depends on Mg(2+) as a cofactor.

The catalysed reaction is 5-(2-hydroxyethyl)-4-methylthiazole + ATP = 4-methyl-5-(2-phosphooxyethyl)-thiazole + ADP + H(+). It functions in the pathway cofactor biosynthesis; thiamine diphosphate biosynthesis; 4-methyl-5-(2-phosphoethyl)-thiazole from 5-(2-hydroxyethyl)-4-methylthiazole: step 1/1. Catalyzes the phosphorylation of the hydroxyl group of 4-methyl-5-beta-hydroxyethylthiazole (THZ). The chain is Hydroxyethylthiazole kinase 2 from Clostridium botulinum (strain Loch Maree / Type A3).